A 205-amino-acid polypeptide reads, in one-letter code: Iron-sulfur assembly protein 2 (205 aa).

Fe cation is bound by residues Cys-131, Cys-196, and Cys-198.

It belongs to the HesB/IscA family.

Its subcellular location is the mitochondrion matrix. Functionally, involved in the assembly of mitochondrial and cytoplasmic iron-sulfur proteins. Probably involved in the binding of an intermediate of Fe/S cluster assembly. The protein is Iron-sulfur assembly protein 2 (isa2) of Schizosaccharomyces pombe (strain 972 / ATCC 24843) (Fission yeast).